The chain runs to 173 residues: Photosystem I assembly protein Ycf3 (173 aa).

TPR repeat units lie at residues 35-68 (AYVYYRDGLSAQNAGDYAEALENYEESLKLEESP), 72-105 (SETLKNMAIIYMSNGDEDLALDTYQRALDQNSNQ), and 120-153 (GRTAQEAGLQDEADQLFDRAADVWTQAVRLYPGG).

This sequence belongs to the Ycf3 family.

Its subcellular location is the cellular thylakoid membrane. Essential for the assembly of the photosystem I (PSI) complex. May act as a chaperone-like factor to guide the assembly of the PSI subunits. The sequence is that of Photosystem I assembly protein Ycf3 from Prochlorococcus marinus (strain MIT 9303).